Here is a 149-residue protein sequence, read N- to C-terminus: Nucleoside diphosphate kinase (149 aa).

Residues lysine 9, phenylalanine 57, arginine 85, threonine 91, arginine 102, and asparagine 112 each coordinate ATP. Residue histidine 115 is the Pros-phosphohistidine intermediate of the active site.

Belongs to the NDK family. In terms of assembly, homotetramer. Mg(2+) is required as a cofactor.

It is found in the cytoplasm. It catalyses the reaction a 2'-deoxyribonucleoside 5'-diphosphate + ATP = a 2'-deoxyribonucleoside 5'-triphosphate + ADP. The catalysed reaction is a ribonucleoside 5'-diphosphate + ATP = a ribonucleoside 5'-triphosphate + ADP. Its function is as follows. Major role in the synthesis of nucleoside triphosphates other than ATP. The ATP gamma phosphate is transferred to the NDP beta phosphate via a ping-pong mechanism, using a phosphorylated active-site intermediate. The protein is Nucleoside diphosphate kinase of Microcystis aeruginosa (strain NIES-843 / IAM M-2473).